Here is a 291-residue protein sequence, read N- to C-terminus: Phosphatidylserine decarboxylase proenzyme (291 aa).

Catalysis depends on charge relay system; for autoendoproteolytic cleavage activity residues aspartate 93, histidine 150, and serine 253. The active-site Schiff-base intermediate with substrate; via pyruvic acid; for decarboxylase activity is serine 253. Serine 253 bears the Pyruvic acid (Ser); by autocatalysis mark.

It belongs to the phosphatidylserine decarboxylase family. PSD-B subfamily. Prokaryotic type I sub-subfamily. As to quaternary structure, heterodimer of a large membrane-associated beta subunit and a small pyruvoyl-containing alpha subunit. Pyruvate is required as a cofactor. Is synthesized initially as an inactive proenzyme. Formation of the active enzyme involves a self-maturation process in which the active site pyruvoyl group is generated from an internal serine residue via an autocatalytic post-translational modification. Two non-identical subunits are generated from the proenzyme in this reaction, and the pyruvate is formed at the N-terminus of the alpha chain, which is derived from the carboxyl end of the proenzyme. The autoendoproteolytic cleavage occurs by a canonical serine protease mechanism, in which the side chain hydroxyl group of the serine supplies its oxygen atom to form the C-terminus of the beta chain, while the remainder of the serine residue undergoes an oxidative deamination to produce ammonia and the pyruvoyl prosthetic group on the alpha chain. During this reaction, the Ser that is part of the protease active site of the proenzyme becomes the pyruvoyl prosthetic group, which constitutes an essential element of the active site of the mature decarboxylase.

The protein resides in the cell membrane. The enzyme catalyses a 1,2-diacyl-sn-glycero-3-phospho-L-serine + H(+) = a 1,2-diacyl-sn-glycero-3-phosphoethanolamine + CO2. Its pathway is phospholipid metabolism; phosphatidylethanolamine biosynthesis; phosphatidylethanolamine from CDP-diacylglycerol: step 2/2. Catalyzes the formation of phosphatidylethanolamine (PtdEtn) from phosphatidylserine (PtdSer). The polypeptide is Phosphatidylserine decarboxylase proenzyme (Alcanivorax borkumensis (strain ATCC 700651 / DSM 11573 / NCIMB 13689 / SK2)).